We begin with the raw amino-acid sequence, 138 residues long: Histone H2AX (138 aa).

Residues 1–23 (MSTTGKGGKAKGKTASSKQVSRS) are disordered. Ser-2 carries the N-acetylserine modification. 5 positions are modified to N6-acetyllysine: Lys-6, Lys-9, Lys-11, Lys-13, and Lys-18. Ser-123 carries the post-translational modification Phosphoserine. A Glycyl lysine isopeptide (Lys-Gly) (interchain with G-Cter in ubiquitin) cross-link involves residue Lys-124. Phosphoserine is present on residues Ser-125, Ser-130, and Ser-135. The [ST]-Q motif motif lies at 135 to 136 (SQ).

It belongs to the histone H2A family. As to quaternary structure, the nucleosome is a histone octamer containing two molecules each of H2A, H2B, H3 and H4 assembled in one H3-H4 heterotetramer and two H2A-H2B heterodimers. The octamer wraps approximately 147 bp of DNA. Monoubiquitination of Lys-124 gives a specific tag for epigenetic transcriptional repression. Post-translationally, acetylation occurs almost exclusively in the MAC.

It localises to the nucleus. The protein localises to the chromosome. Its function is as follows. Core component of nucleosome. Nucleosomes wrap and compact DNA into chromatin, limiting DNA accessibility to the cellular machineries which require DNA as a template. Histones thereby play a central role in transcription regulation, DNA repair, DNA replication and chromosomal stability. DNA accessibility is regulated via a complex set of post-translational modifications of histones, also called histone code, and nucleosome remodeling. The polypeptide is Histone H2AX (HTA1) (Tetrahymena pyriformis).